A 228-amino-acid chain; its full sequence is Pyridoxal phosphate homeostasis protein (228 aa).

K35 bears the N6-(pyridoxal phosphate)lysine mark.

Belongs to the pyridoxal phosphate-binding protein YggS/PROSC family.

In terms of biological role, pyridoxal 5'-phosphate (PLP)-binding protein, which is involved in PLP homeostasis. The chain is Pyridoxal phosphate homeostasis protein from Aquifex aeolicus (strain VF5).